A 475-amino-acid chain; its full sequence is Ribulose bisphosphate carboxylase large chain (475 aa).

2 residues coordinate substrate: Asn123 and Thr173. The active-site Proton acceptor is the Lys175. Position 177 (Lys177) interacts with substrate. The Mg(2+) site is built by Lys201, Asp203, and Glu204. Lys201 bears the N6-carboxylysine mark. His294 serves as the catalytic Proton acceptor. Substrate contacts are provided by Arg295, His327, and Ser379.

Belongs to the RuBisCO large chain family. Type I subfamily. Heterohexadecamer of 8 large chains and 8 small chains. The cofactor is Mg(2+).

Its subcellular location is the plastid. It localises to the chloroplast. It carries out the reaction 2 (2R)-3-phosphoglycerate + 2 H(+) = D-ribulose 1,5-bisphosphate + CO2 + H2O. The catalysed reaction is D-ribulose 1,5-bisphosphate + O2 = 2-phosphoglycolate + (2R)-3-phosphoglycerate + 2 H(+). RuBisCO catalyzes two reactions: the carboxylation of D-ribulose 1,5-bisphosphate, the primary event in carbon dioxide fixation, as well as the oxidative fragmentation of the pentose substrate in the photorespiration process. Both reactions occur simultaneously and in competition at the same active site. This Bigelowiella natans (Pedinomonas minutissima) protein is Ribulose bisphosphate carboxylase large chain.